We begin with the raw amino-acid sequence, 343 residues long: ATP phosphoribosyltransferase regulatory subunit (343 aa).

The tract at residues 324–343 (RANGRAKRPARPRRSPPRPR) is disordered. Residues 327-343 (GRAKRPARPRRSPPRPR) show a composition bias toward basic residues.

The protein belongs to the class-II aminoacyl-tRNA synthetase family. HisZ subfamily. In terms of assembly, heteromultimer composed of HisG and HisZ subunits.

Its subcellular location is the cytoplasm. It participates in amino-acid biosynthesis; L-histidine biosynthesis; L-histidine from 5-phospho-alpha-D-ribose 1-diphosphate: step 1/9. In terms of biological role, required for the first step of histidine biosynthesis. May allow the feedback regulation of ATP phosphoribosyltransferase activity by histidine. In Anaeromyxobacter sp. (strain Fw109-5), this protein is ATP phosphoribosyltransferase regulatory subunit.